The primary structure comprises 191 residues: Glycerol-3-phosphate acyltransferase (191 aa).

Helical transmembrane passes span 5 to 25, 50 to 70, 78 to 98, 112 to 132, and 153 to 173; these read IVFV…ITKI, CIAA…VYIA, SFHM…PVWL, ILIA…LAVF, and SFFF…LIFF.

It belongs to the PlsY family. In terms of assembly, probably interacts with PlsX.

Its subcellular location is the cell membrane. The enzyme catalyses an acyl phosphate + sn-glycerol 3-phosphate = a 1-acyl-sn-glycero-3-phosphate + phosphate. The protein operates within lipid metabolism; phospholipid metabolism. In terms of biological role, catalyzes the transfer of an acyl group from acyl-phosphate (acyl-PO(4)) to glycerol-3-phosphate (G3P) to form lysophosphatidic acid (LPA). This enzyme utilizes acyl-phosphate as fatty acyl donor, but not acyl-CoA or acyl-ACP. The protein is Glycerol-3-phosphate acyltransferase of Wolbachia sp. subsp. Brugia malayi (strain TRS).